The chain runs to 489 residues: Betaine aldehyde dehydrogenase (489 aa).

K(+)-binding residues include T26 and D93. 150-152 contributes to the NAD(+) binding site; the sequence is GAW. Catalysis depends on K162, which acts as the Charge relay system. 176–179 is a binding site for NAD(+); it reads KPSE. K(+) is bound at residue V180. Position 229-232 (229-232) interacts with NAD(+); it reads GVET. Residue L245 participates in K(+) binding. The Proton acceptor role is filled by E251. The NAD(+) site is built by G253, C285, and E386. Residue C285 is the Nucleophile of the active site. C285 bears the Cysteine sulfenic acid (-SOH) mark. The K(+) site is built by K456 and G459. E463 (charge relay system) is an active-site residue.

The protein belongs to the aldehyde dehydrogenase family. Dimer of dimers. It depends on K(+) as a cofactor.

It catalyses the reaction betaine aldehyde + NAD(+) + H2O = glycine betaine + NADH + 2 H(+). Its pathway is amine and polyamine biosynthesis; betaine biosynthesis via choline pathway; betaine from betaine aldehyde: step 1/1. Involved in the biosynthesis of the osmoprotectant glycine betaine. Catalyzes the irreversible oxidation of betaine aldehyde to the corresponding acid. The protein is Betaine aldehyde dehydrogenase of Paraburkholderia phymatum (strain DSM 17167 / CIP 108236 / LMG 21445 / STM815) (Burkholderia phymatum).